We begin with the raw amino-acid sequence, 179 residues long: Large ribosomal subunit protein uL5 (179 aa).

This sequence belongs to the universal ribosomal protein uL5 family. As to quaternary structure, part of the 50S ribosomal subunit; part of the 5S rRNA/L5/L18/L25 subcomplex. Contacts the 5S rRNA and the P site tRNA. Forms a bridge to the 30S subunit in the 70S ribosome.

Its function is as follows. This is one of the proteins that bind and probably mediate the attachment of the 5S RNA into the large ribosomal subunit, where it forms part of the central protuberance. In the 70S ribosome it contacts protein S13 of the 30S subunit (bridge B1b), connecting the 2 subunits; this bridge is implicated in subunit movement. Contacts the P site tRNA; the 5S rRNA and some of its associated proteins might help stabilize positioning of ribosome-bound tRNAs. This is Large ribosomal subunit protein uL5 from Bacillus licheniformis (strain ATCC 14580 / DSM 13 / JCM 2505 / CCUG 7422 / NBRC 12200 / NCIMB 9375 / NCTC 10341 / NRRL NRS-1264 / Gibson 46).